A 513-amino-acid chain; its full sequence is Probable G-protein coupled receptor 176 (513 aa).

Positions Met-1–Ala-25 are disordered. Residues Met-1–Gln-41 are Extracellular-facing. N-linked (GlcNAc...) asparagine glycans are attached at residues Asn-4, Asn-11, Asn-17, and Asn-26. A helical membrane pass occupies residues Phe-42 to Ser-64. At Thr-65 to Arg-77 the chain is on the cytoplasmic side. Residues Phe-78–Ile-98 form a helical membrane-spanning segment. The Extracellular portion of the chain corresponds to Ile-99–Trp-108. Residues Trp-109–Val-129 traverse the membrane as a helical segment. Topologically, residues Thr-130–Lys-157 are cytoplasmic. The chain crosses the membrane as a helical span at residues Ser-158–Phe-177. Residues Ala-178–Tyr-204 lie on the Extracellular side of the membrane. The helical transmembrane segment at Val-205–Ile-225 threads the bilayer. Topologically, residues Leu-226 to His-264 are cytoplasmic. Residues Ala-265 to Val-285 traverse the membrane as a helical segment. Topologically, residues Val-286–Leu-301 are extracellular. Residues Leu-302–Val-322 form a helical membrane-spanning segment. Residues Asn-323 to Ser-513 are Cytoplasmic-facing. The segment at Val-404 to Val-432 is disordered.

This sequence belongs to the G-protein coupled receptor 1 family. Expressed in brain, lung, heart, stomach, intestine, cultured aortic smooth muscle cells and cardiac myocytes.

The protein resides in the cell membrane. In terms of biological role, orphan receptor involved in normal circadian rhythm behavior. Acts through the G-protein subclass G(z)-alpha and has an agonist-independent basal activity to repress cAMP production. The protein is Probable G-protein coupled receptor 176 (Gpr176) of Rattus norvegicus (Rat).